A 276-amino-acid chain; its full sequence is MRRDVNGVTKSRFEMFSNSDEAVINKKLPKELLLRIFSFLDVVTLCRCAQVSRAWNVLALDGSNWQRIDLFDFQRDIEGRVVENISKRCGGFLRKLSLRGCLGVGDNALRTFAQNCRNIEVLSLNGCTKTTDATCTSLSKFCSKLRHLDLASCTSITNMSLKALSEGCPLLEQLNISWCDQVTKDGIQALVRGCGGLKALFLKGCTQLEDEALKYIGAHCPELVTLNLQTCLQITDEGLITICRGCHKLQSLCASGCSNITDAILNALGQNCPRLR.

Positions 22-68 (AVINKKLPKELLLRIFSFLDVVTLCRCAQVSRAWNVLALDGSNWQRI) constitute an F-box domain. 8 LRR repeats span residues 74–100 (QRDI…SLRG), 101–126 (CLGV…SLNG), 127–152 (CTKT…DLAS), 153–178 (CTSI…NISW), 179–204 (CDQV…FLKG), 205–230 (CTQL…NLQT), 231–256 (CLQI…CASG), and 257–276 (CSNI…PRLR).

As to quaternary structure, interacts with SKP1 and CUL1. In terms of tissue distribution, widely expressed, with highest expression in skeletal muscle, heart and brain.

The protein resides in the cytoplasm. Substrate-recognition component of the SCF (SKP1-CUL1-F-box protein)-type E3 ubiquitin ligase complex. Role in neural transmission. The chain is F-box/LRR-repeat protein 20 (Fbxl20) from Rattus norvegicus (Rat).